Reading from the N-terminus, the 206-residue chain is Small ribosomal subunit protein uS4 (206 aa).

In terms of domain architecture, S4 RNA-binding spans 94 to 157 (RRLDNVVYRL…RRRTYFKNLI (64 aa)).

It belongs to the universal ribosomal protein uS4 family. As to quaternary structure, part of the 30S ribosomal subunit. Contacts protein S5. The interaction surface between S4 and S5 is involved in control of translational fidelity.

In terms of biological role, one of the primary rRNA binding proteins, it binds directly to 16S rRNA where it nucleates assembly of the body of the 30S subunit. Its function is as follows. With S5 and S12 plays an important role in translational accuracy. This Roseiflexus sp. (strain RS-1) protein is Small ribosomal subunit protein uS4.